An 83-amino-acid polypeptide reads, in one-letter code: Exodeoxyribonuclease 7 small subunit (83 aa).

Belongs to the XseB family. Heterooligomer composed of large and small subunits.

Its subcellular location is the cytoplasm. It catalyses the reaction Exonucleolytic cleavage in either 5'- to 3'- or 3'- to 5'-direction to yield nucleoside 5'-phosphates.. Its function is as follows. Bidirectionally degrades single-stranded DNA into large acid-insoluble oligonucleotides, which are then degraded further into small acid-soluble oligonucleotides. The protein is Exodeoxyribonuclease 7 small subunit of Mesorhizobium japonicum (strain LMG 29417 / CECT 9101 / MAFF 303099) (Mesorhizobium loti (strain MAFF 303099)).